The chain runs to 890 residues: Inter-alpha-trypsin inhibitor heavy chain H3 (890 aa).

The first 20 residues, Met-1–Ser-20, serve as a signal peptide directing secretion. Residues Gly-21–Ser-34 constitute a propeptide that is removed on maturation. Residues Leu-29–Glu-158 form the VIT domain. N-linked (GlcNAc...) asparagine glycosylation is present at Asn-91. Residues Asn-284–Val-467 form the VWFA domain. The N-linked (GlcNAc...) asparagine glycan is linked to Asn-580. At Asp-651 the chain carries Aspartate 1-(chondroitin 4-sulfate)-ester. Positions Pro-652 to Phe-890 are excised as a propeptide.

The protein belongs to the ITIH family. As to quaternary structure, I-alpha-I plasma protease inhibitors are assembled from one or two heavy chains (HC) and one light chain, bikunin. Pre-alpha-inhibitor (P-alpha-I) is composed of ITIH3/HC3 and bikunin. In terms of processing, heavy chains are linked to bikunin via chondroitin 4-sulfate esterified to the alpha-carboxyl of the C-terminal aspartate after propeptide cleavage.

The protein resides in the secreted. Functionally, may act as a carrier of hyaluronan in serum or as a binding protein between hyaluronan and other matrix protein, including those on cell surfaces in tissues to regulate the localization, synthesis and degradation of hyaluronan which are essential to cells undergoing biological processes. The protein is Inter-alpha-trypsin inhibitor heavy chain H3 (ITIH3) of Homo sapiens (Human).